A 236-amino-acid polypeptide reads, in one-letter code: Uridylate kinase (236 aa).

Position 12–15 (12–15) interacts with ATP; that stretch reads KISG. An involved in allosteric activation by GTP region spans residues 20–25; that stretch reads GKKGFG. G54 contributes to the UMP binding site. Residues G55 and R59 each contribute to the ATP site. Residues D72 and 133 to 140 each bind UMP; that span reads TGNPYFST. Residues Y166 and D169 each coordinate ATP.

Belongs to the UMP kinase family. In terms of assembly, homohexamer.

Its subcellular location is the cytoplasm. It carries out the reaction UMP + ATP = UDP + ADP. It participates in pyrimidine metabolism; CTP biosynthesis via de novo pathway; UDP from UMP (UMPK route): step 1/1. Allosterically activated by GTP. Inhibited by UTP. In terms of biological role, catalyzes the reversible phosphorylation of UMP to UDP. In Clostridium novyi (strain NT), this protein is Uridylate kinase.